A 209-amino-acid chain; its full sequence is Putative AgrB-like protein (209 aa).

5 helical membrane passes run 49–71 (ILFL…AAFG), 82–102 (AKNS…GAYL), 105–125 (YLLF…LLLF), 149–169 (QAVL…DELI), and 173–193 (ISLS…KVLG).

This sequence belongs to the AgrB family.

The protein resides in the cell membrane. Its function is as follows. May be involved in the proteolytic processing of a quorum sensing system signal molecule precursor. This is Putative AgrB-like protein from Clostridium acetobutylicum (strain ATCC 824 / DSM 792 / JCM 1419 / IAM 19013 / LMG 5710 / NBRC 13948 / NRRL B-527 / VKM B-1787 / 2291 / W).